Here is a 159-residue protein sequence, read N- to C-terminus: Endoribonuclease YbeY (159 aa).

Zn(2+) contacts are provided by histidine 125, histidine 129, and histidine 135.

This sequence belongs to the endoribonuclease YbeY family. It depends on Zn(2+) as a cofactor.

It is found in the cytoplasm. In terms of biological role, single strand-specific metallo-endoribonuclease involved in late-stage 70S ribosome quality control and in maturation of the 3' terminus of the 16S rRNA. This chain is Endoribonuclease YbeY, found in Limosilactobacillus reuteri (strain DSM 20016) (Lactobacillus reuteri).